Here is a 181-residue protein sequence, read N- to C-terminus: MTDRTDADDLDLQRVGARLAARAQIRDIRLLRTQAAVHRAPKPAQGLTYDLEFEPAVDADPATISAFVVRISCHLRIQNQAADNDVKEGDTKDETQDVATADFEFAALFDYHLQEGEDDPTEEELTAYAATTGRFALYPYIREYVYDLTGRLALPPLTLEILSRPMPVSPGAQWPATRGTP.

It belongs to the SecB-like family. In terms of assembly, homotetramer, interacts with antitoxin HigA1.

Its function is as follows. Chaperone component of an atypical, type II toxin-antitoxin chaperone (TAC) module, probably required for antitoxin HigA1 to neutralize its cognate toxin HigB1. The sequence is that of SecB-like chaperone MT2006 (secBL) from Mycobacterium tuberculosis (strain CDC 1551 / Oshkosh).